The primary structure comprises 158 residues: Small ribosomal subunit protein uS9 (158 aa).

It belongs to the universal ribosomal protein uS9 family.

The polypeptide is Small ribosomal subunit protein uS9 (Brucella canis (strain ATCC 23365 / NCTC 10854 / RM-666)).